We begin with the raw amino-acid sequence, 102 residues long: Vesicle-associated membrane protein 5 (102 aa).

At 1 to 72 (MAGKELERCQ…RWENIRCRVY (72 aa)) the chain is on the cytoplasmic side. Residues 5–65 (ELERCQRQAD…KTLAQQKRWE (61 aa)) form the v-SNARE coiled-coil homology domain. A phosphoserine mark is found at Ser41, Ser48, and Ser49. The helical; Anchor for type IV membrane protein transmembrane segment at 73 to 93 (LGLAVAGGLLLILVVLLVIFL) threads the bilayer. The Vesicular segment spans residues 94 to 102 (PSGEDSSKP).

Belongs to the synaptobrevin family.

It localises to the cell membrane. The protein localises to the endomembrane system. Its subcellular location is the golgi apparatus. The protein resides in the trans-Golgi network membrane. May participate in trafficking events that are associated with myogenesis, such as myoblast fusion and/or GLUT4 trafficking. The chain is Vesicle-associated membrane protein 5 (Vamp5) from Rattus norvegicus (Rat).